Consider the following 154-residue polypeptide: Interleukin-7 (154 aa).

Positions 1–25 are cleaved as a signal peptide; that stretch reads MFHVSFRYIFGIPPLILVLLPVTSS. 3 cysteine pairs are disulfide-bonded: C27–C145, C58–C133, and C71–C116. N94 and N115 each carry an N-linked (GlcNAc...) asparagine glycan.

Belongs to the IL-7/IL-9 family. As to quaternary structure, interacts with IL7R and CSF2RG. In terms of processing, three disulfide bonds are present.

Its subcellular location is the secreted. Hematopoietic cytokine that plays an essential role in the development, expansion, and survival of naive and memory T-cells and B-cells thereby regulating the number of mature lymphocytes and maintaining lymphoid homeostasis. Mechanistically, exerts its biological effects through a receptor composed of IL7RA subunit and the cytokine receptor common subunit gamma/CSF2RG. Binding to the receptor leads to activation of various kinases including JAK1 or JAK3 depending on the cell type and subsequently propagation of signals through activation of several downstream signaling pathways including the PI3K/Akt/mTOR or the JAK-STAT5. This is Interleukin-7 (Il7) from Mus musculus (Mouse).